We begin with the raw amino-acid sequence, 728 residues long: 1,4-alpha-glucan branching enzyme GlgB (728 aa).

D405 functions as the Nucleophile in the catalytic mechanism. E458 (proton donor) is an active-site residue.

It belongs to the glycosyl hydrolase 13 family. GlgB subfamily. Monomer.

It carries out the reaction Transfers a segment of a (1-&gt;4)-alpha-D-glucan chain to a primary hydroxy group in a similar glucan chain.. It participates in glycan biosynthesis; glycogen biosynthesis. Functionally, catalyzes the formation of the alpha-1,6-glucosidic linkages in glycogen by scission of a 1,4-alpha-linked oligosaccharide from growing alpha-1,4-glucan chains and the subsequent attachment of the oligosaccharide to the alpha-1,6 position. This Escherichia coli O1:K1 / APEC protein is 1,4-alpha-glucan branching enzyme GlgB.